We begin with the raw amino-acid sequence, 225 residues long: Membrane protein (225 aa).

At 1 to 20 (MPNETNCTLDFEQSVQLFKE) the chain is on the virion surface side. Residues 21-41 (YNLFITAFLLFLTIILQYGYA) traverse the membrane as a helical segment. Over 42–51 (TRTKVIYTLK) the chain is Intravirion. Residues 52–72 (MIVLWCFWPLNIAVGVISCTY) form a helical membrane-spanning segment. Topologically, residues 73–77 (PPNTG) are virion surface. A helical membrane pass occupies residues 78-98 (GLVVAIILTVFACLSFVGYWI). The Intravirion portion of the chain corresponds to 99–225 (QSIRLFKRCR…VATGGSSLYT (127 aa)).

The protein belongs to the gammacoronaviruses M protein family. As to quaternary structure, homomultimer. Interacts with envelope E protein in the budding compartment of the host cell, which is located between endoplasmic reticulum and the Golgi complex. Forms a complex with HE and S proteins. Interacts with nucleocapsid N protein. This interaction probably participates in RNA packaging into the virus.

It localises to the virion membrane. The protein resides in the host Golgi apparatus membrane. Its function is as follows. Component of the viral envelope that plays a central role in virus morphogenesis and assembly via its interactions with other viral proteins. The chain is Membrane protein from Avian infectious bronchitis virus (strain Beaudette US) (IBV).